The primary structure comprises 319 residues: MEADNTTETDWLNITYITMEAAIGLCAVVGNMLVIWVVKLNPTLRTTTVYFIVSLALADIAVGVLVIPLAIAVSLQVKMHFYACLFMSCVLLIFTHASIMSLLAIAVHRYLRVKLTVRYRTVTTQRRIWLFLGLCWLVSFLVGLTPMFGWNRKATLASSQNSSTLLCHFRSVVSLDYMVFFSFITWILVPLVVMCIIYLDIFYIIRNKLSQNLTGFRETRAFYGREFKTAKSLFLVLFLFALCWLPLSIINFVSYFDVKIPDVAMCLGILLSHANSMMNPIVYACKIKKFKETYFLILRAVRLCQTSDSLDSNMEQTTE.

The Extracellular segment spans residues 1 to 15; the sequence is MEADNTTETDWLNIT. N-linked (GlcNAc...) asparagine glycans are attached at residues Asn5 and Asn13. The helical transmembrane segment at 16–38 threads the bilayer; it reads YITMEAAIGLCAVVGNMLVIWVV. Over 39-49 the chain is Cytoplasmic; sequence KLNPTLRTTTV. The helical transmembrane segment at 50–73 threads the bilayer; sequence YFIVSLALADIAVGVLVIPLAIAV. Topologically, residues 74–85 are extracellular; the sequence is SLQVKMHFYACL. Cys84 and Cys167 form a disulfide bridge. The chain crosses the membrane as a helical span at residues 86–107; sequence FMSCVLLIFTHASIMSLLAIAV. Residues 108 to 127 are Cytoplasmic-facing; it reads HRYLRVKLTVRYRTVTTQRR. Residues 128–149 form a helical membrane-spanning segment; sequence IWLFLGLCWLVSFLVGLTPMFG. Topologically, residues 150-178 are extracellular; the sequence is WNRKATLASSQNSSTLLCHFRSVVSLDYM. Residue Asn161 is glycosylated (N-linked (GlcNAc...) asparagine). The helical transmembrane segment at 179–199 threads the bilayer; the sequence is VFFSFITWILVPLVVMCIIYL. Residues 200–232 lie on the Cytoplasmic side of the membrane; that stretch reads DIFYIIRNKLSQNLTGFRETRAFYGREFKTAKS. The chain crosses the membrane as a helical span at residues 233–256; the sequence is LFLVLFLFALCWLPLSIINFVSYF. The Extracellular portion of the chain corresponds to 257–262; the sequence is DVKIPD. A helical membrane pass occupies residues 263 to 285; it reads VAMCLGILLSHANSMMNPIVYAC. Residues 286 to 319 lie on the Cytoplasmic side of the membrane; sequence KIKKFKETYFLILRAVRLCQTSDSLDSNMEQTTE. A lipid anchor (S-palmitoyl cysteine) is attached at Cys304.

It belongs to the G-protein coupled receptor 1 family. Phosphorylation on Thr-317 and Thr-318 may be crucial for rapid desensitization. Phosphorylation on Thr-317 may be necessary for phosphorylation on Thr-318 to occur.

Its subcellular location is the cell membrane. In terms of biological role, receptor for adenosine. The activity of this receptor is mediated by G proteins which inhibits adenylyl cyclase. The protein is Adenosine receptor A3 (Adora3) of Mus musculus (Mouse).